Reading from the N-terminus, the 717-residue chain is Putative amino acid transporter AAT1 (717 aa).

Residues 1–10 (MREGAFDASR) are compositionally biased toward basic and acidic residues. The tract at residues 1–88 (MREGAFDASR…DRAQTDSRQE (88 aa)) is disordered. The span at 16-25 (QRPSSLSTAQ) shows a compositional bias: polar residues. The segment covering 26–53 (PPSDSRPPSSSSPPSSSSSSSSASSSSP) has biased composition (low complexity). A compositionally biased stretch (basic and acidic residues) spans 74–88 (SAEKMDRAQTDSRQE). A run of 8 helical transmembrane segments spans residues 124-143 (VLTL…PYAM), 149-170 (LIGL…YILM), 196-216 (AVDA…LVFL), 236-253 (HRAA…PLSV), 265-283 (FFPV…YRSL), 303-320 (FKSF…INVC), 341-358 (AALL…LGYL), and 378-402 (LMHV…IPTV). A disordered region spans residues 462-602 (GDAEYGGAEA…REEREEREGQ (141 aa)). Over residues 463 to 477 (DAEYGGAEAGEATRG) the composition is skewed to low complexity. A compositionally biased stretch (basic and acidic residues) spans 497–519 (ARNRDRSRLHADSERSAGDREGS). The span at 547–558 (GSSSASSRSVDS) shows a compositional bias: low complexity. Residues 584-602 (SGDREAREEREEREEREGQ) are compositionally biased toward basic and acidic residues. The next 3 helical transmembrane spans lie at 622-638 (VCVA…ALVL), 644-669 (VVGL…YAGI), and 681-702 (LLMV…IIIL).

The protein belongs to the amino acid/polyamine transporter 2 family.

It is found in the vacuole membrane. Its function is as follows. Putative amino acid transporter. Probably transports arginine. Involved in maintaining the osmotic homeostasis of the digestive vacuole. Required for extracellular parasite survival and bradyzoite differentiation. In Toxoplasma gondii (strain ATCC 50611 / Me49), this protein is Putative amino acid transporter AAT1.